Reading from the N-terminus, the 852-residue chain is GPI ethanolamine phosphate transferase 2 (852 aa).

Residues Asn-191 and Asn-420 are each glycosylated (N-linked (GlcNAc...) asparagine). The next 3 membrane-spanning stretches (helical) occupy residues 458-478, 486-506, and 516-536; these read LIRL…TFFP, FAPA…MMFA, and FWYW…AGHF. Asn-576 is a glycosylation site (N-linked (GlcNAc...) asparagine). Transmembrane regions (helical) follow at residues 632 to 652, 676 to 696, 714 to 734, 750 to 770, 787 to 807, and 824 to 844; these read LLYH…YSLY, TLTL…FLVF, TITS…SNAI, SVFI…IWWV, AHVT…MAAC, and YLYT…LGEI.

The protein belongs to the PIGG/PIGN/PIGO family. PIGG subfamily.

It localises to the endoplasmic reticulum membrane. It functions in the pathway glycolipid biosynthesis; glycosylphosphatidylinositol-anchor biosynthesis. Its function is as follows. Ethanolamine phosphate transferase involved in glycosylphosphatidylinositol-anchor biosynthesis. Transfers ethanolamine phosphate to the GPI second mannose. This is GPI ethanolamine phosphate transferase 2 (las21) from Aspergillus oryzae (strain ATCC 42149 / RIB 40) (Yellow koji mold).